We begin with the raw amino-acid sequence, 451 residues long: Tubulin alpha-2 chain (451 aa).

Q11 provides a ligand contact to GTP. K40 bears the N6-acetyllysine mark. The GTP site is built by E71, G144, T145, T179, N206, and N228. E71 contributes to the Mg(2+) binding site. E254 is a catalytic residue.

It belongs to the tubulin family. As to quaternary structure, dimer of alpha and beta chains. A typical microtubule is a hollow water-filled tube with an outer diameter of 25 nm and an inner diameter of 15 nM. Alpha-beta heterodimers associate head-to-tail to form protofilaments running lengthwise along the microtubule wall with the beta-tubulin subunit facing the microtubule plus end conferring a structural polarity. Microtubules usually have 13 protofilaments but different protofilament numbers can be found in some organisms and specialized cells. Requires Mg(2+) as cofactor. Undergoes a tyrosination/detyrosination cycle, the cyclic removal and re-addition of a C-terminal tyrosine residue by the enzymes tubulin tyrosine carboxypeptidase (TTCP) and tubulin tyrosine ligase (TTL), respectively. Post-translationally, acetylation of alpha chains at Lys-40 stabilizes microtubules and affects affinity and processivity of microtubule motors. This modification has a role in multiple cellular functions, ranging from cell motility, cell cycle progression or cell differentiation to intracellular trafficking and signaling.

It is found in the cytoplasm. It localises to the cytoskeleton. The catalysed reaction is GTP + H2O = GDP + phosphate + H(+). In terms of biological role, tubulin is the major constituent of microtubules, a cylinder consisting of laterally associated linear protofilaments composed of alpha- and beta-tubulin heterodimers. Microtubules grow by the addition of GTP-tubulin dimers to the microtubule end, where a stabilizing cap forms. Below the cap, tubulin dimers are in GDP-bound state, owing to GTPase activity of alpha-tubulin. In Zea mays (Maize), this protein is Tubulin alpha-2 chain (TUBA2).